The primary structure comprises 412 residues: Na(+)-translocating NADH-quinone reductase subunit B (412 aa).

The next 3 membrane-spanning stretches (helical) occupy residues 57–77 (MILVWFAVFPAMFWGMYNVGL), 127–147 (VFFLPIYITVFIVGGFWEVLF), and 163–183 (SILFALIVPPTLPLWQAALGI). At T236 the chain carries FMN phosphoryl threonine. A run of 5 helical transmembrane segments spans residues 270-290 (GSIGEVSTLMIFIGGAIILFG), 297-317 (IVAGVMIGMIATATLFNVIGS), 322-342 (MFAMPWYWHLVLGGFAFGMMF), 358-378 (WSYGVLIGVMCVLIRVVNPAY), and 381-401 (GMMLAILFANLFAPLFDYLVV).

It belongs to the NqrB/RnfD family. Composed of six subunits; NqrA, NqrB, NqrC, NqrD, NqrE and NqrF. Requires FMN as cofactor.

It localises to the cell inner membrane. The catalysed reaction is a ubiquinone + n Na(+)(in) + NADH + H(+) = a ubiquinol + n Na(+)(out) + NAD(+). Functionally, NQR complex catalyzes the reduction of ubiquinone-1 to ubiquinol by two successive reactions, coupled with the transport of Na(+) ions from the cytoplasm to the periplasm. NqrA to NqrE are probably involved in the second step, the conversion of ubisemiquinone to ubiquinol. This chain is Na(+)-translocating NADH-quinone reductase subunit B, found in Klebsiella pneumoniae subsp. pneumoniae (strain ATCC 700721 / MGH 78578).